A 389-amino-acid polypeptide reads, in one-letter code: Sulfate adenylyltransferase (389 aa).

The protein belongs to the sulfate adenylyltransferase family.

The enzyme catalyses sulfate + ATP + H(+) = adenosine 5'-phosphosulfate + diphosphate. The protein operates within sulfur metabolism; hydrogen sulfide biosynthesis; sulfite from sulfate: step 1/3. This chain is Sulfate adenylyltransferase, found in Deinococcus geothermalis (strain DSM 11300 / CIP 105573 / AG-3a).